The following is an 856-amino-acid chain: Glucans biosynthesis glucosyltransferase H (856 aa).

6 helical membrane passes run 144 to 164, 198 to 218, 517 to 537, 574 to 594, 608 to 628, and 684 to 704; these read ILLV…KGIM, ILIL…TALM, VFLT…FLVL, LFST…ILIW, TLSM…RMIF, and FLWW…VSVI.

Belongs to the glycosyltransferase 2 family. OpgH subfamily.

The protein resides in the cell inner membrane. The protein operates within glycan metabolism; osmoregulated periplasmic glucan (OPG) biosynthesis. Its function is as follows. Involved in the biosynthesis of osmoregulated periplasmic glucans (OPGs). In Pseudomonas fluorescens (strain ATCC BAA-477 / NRRL B-23932 / Pf-5), this protein is Glucans biosynthesis glucosyltransferase H.